We begin with the raw amino-acid sequence, 144 residues long: ATP synthase epsilon chain (144 aa).

The protein belongs to the ATPase epsilon chain family. As to quaternary structure, F-type ATPases have 2 components, CF(1) - the catalytic core - and CF(0) - the membrane proton channel. CF(1) has five subunits: alpha(3), beta(3), gamma(1), delta(1), epsilon(1). CF(0) has three main subunits: a, b and c.

Its subcellular location is the cell inner membrane. Functionally, produces ATP from ADP in the presence of a proton gradient across the membrane. The protein is ATP synthase epsilon chain of Ectopseudomonas mendocina (strain ymp) (Pseudomonas mendocina).